The primary structure comprises 102 residues: RNA-binding protein Hfq (102 aa).

The Sm domain maps to 9 to 68 (DPFLNALRRERVPVSIYLVNGIKLQGQIESFDQFVILLKNTVSQMVYKHAISTVVPSRPV). Residues 63 to 102 (VPSRPVSHHSNNAGGGTSSNYHHGSSAQNTSAQQDSEETE) form a disordered region. The span at 70-96 (HHSNNAGGGTSSNYHHGSSAQNTSAQQ) shows a compositional bias: polar residues.

The protein belongs to the Hfq family. Homohexamer.

In terms of biological role, RNA chaperone that binds small regulatory RNA (sRNAs) and mRNAs to facilitate mRNA translational regulation in response to envelope stress, environmental stress and changes in metabolite concentrations. Also binds with high specificity to tRNAs. This Escherichia fergusonii (strain ATCC 35469 / DSM 13698 / CCUG 18766 / IAM 14443 / JCM 21226 / LMG 7866 / NBRC 102419 / NCTC 12128 / CDC 0568-73) protein is RNA-binding protein Hfq.